Here is a 163-residue protein sequence, read N- to C-terminus: Cyanate hydratase (163 aa).

Active-site residues include Arg103, Glu106, and Ser129.

Belongs to the cyanase family.

The catalysed reaction is cyanate + hydrogencarbonate + 3 H(+) = NH4(+) + 2 CO2. Functionally, catalyzes the reaction of cyanate with bicarbonate to produce ammonia and carbon dioxide. The sequence is that of Cyanate hydratase from Talaromyces marneffei (strain ATCC 18224 / CBS 334.59 / QM 7333) (Penicillium marneffei).